A 236-amino-acid chain; its full sequence is Calcium-binding lectin RapA2 (236 aa).

It is found in the secreted. Interacts specifically in a calcium-dependent manner with the acidic exopolysaccharide (EPS) and capsular polysaccharide produced by R.leguminosarum. Could be involved in the development of the biofilm matrix made of EPS. The polypeptide is Calcium-binding lectin RapA2 (Rhizobium johnstonii (strain DSM 114642 / LMG 32736 / 3841) (Rhizobium leguminosarum bv. viciae)).